Here is a 39-residue protein sequence, read N- to C-terminus: Photosystem II reaction center protein L (39 aa).

The chain crosses the membrane as a helical span at residues 18–38; it reads SLYLGLLLVFVLGILFSSYFF.

It belongs to the PsbL family. PSII is composed of 1 copy each of membrane proteins PsbA, PsbB, PsbC, PsbD, PsbE, PsbF, PsbH, PsbI, PsbJ, PsbK, PsbL, PsbM, PsbT, PsbX, PsbY, Psb30/Ycf12, peripheral proteins PsbO, CyanoQ (PsbQ), PsbU, PsbV and a large number of cofactors. It forms dimeric complexes.

It localises to the cellular thylakoid membrane. Its function is as follows. One of the components of the core complex of photosystem II (PSII). PSII is a light-driven water:plastoquinone oxidoreductase that uses light energy to abstract electrons from H(2)O, generating O(2) and a proton gradient subsequently used for ATP formation. It consists of a core antenna complex that captures photons, and an electron transfer chain that converts photonic excitation into a charge separation. This subunit is found at the monomer-monomer interface and is required for correct PSII assembly and/or dimerization. The polypeptide is Photosystem II reaction center protein L (Prochlorococcus marinus (strain SARG / CCMP1375 / SS120)).